A 181-amino-acid polypeptide reads, in one-letter code: Probable cobalt-precorrin-6B C(15)-methyltransferase (decarboxylating) (181 aa).

S-adenosyl-L-methionine is bound by residues Thr16, 40 to 44 (GCGSG), Asp61, and Ala89.

Belongs to the methyltransferase superfamily. Archaeal-type CbiT family.

It carries out the reaction Co-precorrin-6B + S-adenosyl-L-methionine = Co-precorrin-7 + S-adenosyl-L-homocysteine + CO2. It functions in the pathway cofactor biosynthesis; adenosylcobalamin biosynthesis; cob(II)yrinate a,c-diamide from sirohydrochlorin (anaerobic route): step 8/10. Functionally, catalyzes the methylation of C-15 in cobalt-precorrin-6B followed by the decarboxylation of C-12 to form cobalt-precorrin-7. In Methanococcus maripaludis (strain C7 / ATCC BAA-1331), this protein is Probable cobalt-precorrin-6B C(15)-methyltransferase (decarboxylating).